Here is a 292-residue protein sequence, read N- to C-terminus: MTRIVLFLLTNLAVMLIFSLILFLTGIQSNTIYGLLIMSGLFGFSGSILSLILSKWIALRSVNGEIITHPRNEVESWLINTVRQQSIQKGIIMPQIAVYHATDINAFATGARRNSALIAVSTGLLENMTHHEAEAVIAHEISHIANGDMITMTLVQGVVNTFVIFISRFLSQIISNVMSSNRNENNTEEKNSFVYFLVSTFLELIFGILASIITMWFSRHREFYADASSAKMVGREKMIAALNRLKTSHEPQESDSMIAFCINGKSKSFLKLFASHPSLENRIEALYNQEYM.

Transmembrane regions (helical) follow at residues 4 to 24 (IVLF…ILFL) and 32 to 52 (IYGL…LSLI). Histidine 139 contacts Zn(2+). Residue glutamate 140 is part of the active site. Position 143 (histidine 143) interacts with Zn(2+). The next 2 membrane-spanning stretches (helical) occupy residues 147 to 167 (GDMI…IFIS) and 193 to 213 (FVYF…ASII). Position 222 (glutamate 222) interacts with Zn(2+).

The protein belongs to the peptidase M48B family. The cofactor is Zn(2+).

It is found in the cell membrane. In Buchnera aphidicola subsp. Acyrthosiphon pisum (strain 5A), this protein is Protease HtpX.